A 151-amino-acid chain; its full sequence is Sec-independent protein translocase protein TatB (151 aa).

Residues 1 to 21 (MFDVSFTELMVIGVIALVVIG) traverse the membrane as a helical segment. The segment at 66 to 151 (MDETARSMQT…DKTPPTGSAT (86 aa)) is disordered. Residues 93–103 (AELDDTARDAS) show a composition bias toward basic and acidic residues. Composition is skewed to low complexity over residues 109–122 (ADAPAEPAPAVASD) and 133–151 (APPAAATPADKTPPTGSAT).

It belongs to the TatB family. The Tat system comprises two distinct complexes: a TatABC complex, containing multiple copies of TatA, TatB and TatC subunits, and a separate TatA complex, containing only TatA subunits. Substrates initially bind to the TatABC complex, which probably triggers association of the separate TatA complex to form the active translocon.

The protein resides in the cell inner membrane. Part of the twin-arginine translocation (Tat) system that transports large folded proteins containing a characteristic twin-arginine motif in their signal peptide across membranes. Together with TatC, TatB is part of a receptor directly interacting with Tat signal peptides. TatB may form an oligomeric binding site that transiently accommodates folded Tat precursor proteins before their translocation. In Bordetella parapertussis (strain 12822 / ATCC BAA-587 / NCTC 13253), this protein is Sec-independent protein translocase protein TatB.